The primary structure comprises 419 residues: MAATLSVEPAGRSCWDEPLSIAVRGLAPEQPVTLRSVLRDEKGMLFRAHARYRADSHGELDLARTPALGGSFSGLEPMGLLWAMEPDRPFWRLIKRDVQIPFVVELEVLDGHEPDGGQRLARAVHERHFMAPGVRRVPVREGRVRATLFLPPGKGQFPGIIDLYGSIGGLCEHRASLLAGHGFAVLALAYFQFEDLPENLSDVRLEYFEEALALMLRHPQVKGPNIGLIGVSKGADLCLSMAAFLKDNITATVLINACVANTLVPLYYKDLFVPELGCDQTKNKSGLMDLRDMWNNPLEEPNHQSLIPLEKAQGPFLFLVGMDDHNWKSDVYARIACERLQAHGKDRPQIIYYPETGHCIEPPYFPPPIATVHFVLGEAVFNGGKPRAQSRAQLDAWQRIQTFFQKYLNGEKPARHSKL.

Active-site charge relay system residues include serine 232, aspartate 324, and histidine 358. The short motif at 417–419 (SKL) is the Peroxisome targeting signal element.

It belongs to the C/M/P thioester hydrolase family. Highly expressed in white adipose tissue. Detected at lower levels in kidney, liver, brown adipose tissue and brain.

The protein resides in the peroxisome. The catalysed reaction is pristanoyl-CoA + H2O = 2,6,10,14-tetramethylpentadecanoate + CoA + H(+). The enzyme catalyses phytanoyl-CoA + H2O = 3,7,11,15-tetramethylhexadecanoate + CoA + H(+). Its pathway is lipid metabolism; fatty acid metabolism. Its function is as follows. Catalyzes the hydrolysis of acyl-CoAs into free fatty acids and coenzyme A (CoASH), regulating their respective intracellular levels. Catalyzes the hydrolysis of phytanoyl-CoA and pristanoyl-CoA, two methyl-branched fatty acids derived from phytol, that enter the body via the diet. This Mus musculus (Mouse) protein is Acyl-coenzyme A thioesterase 6.